The following is a 60-amino-acid chain: Large ribosomal subunit protein uL30 (60 aa).

This sequence belongs to the universal ribosomal protein uL30 family. Part of the 50S ribosomal subunit.

The protein is Large ribosomal subunit protein uL30 of Agathobacter rectalis (strain ATCC 33656 / DSM 3377 / JCM 17463 / KCTC 5835 / VPI 0990) (Eubacterium rectale).